We begin with the raw amino-acid sequence, 472 residues long: MLNSRELLLSKYVNTIKKDDNSFRLFHSIHGGLCEVDNEIYKVLNYLKKSRLLTDIYNEFSYIDNSEINDIVNEFFEKGFIIYNGQNEIESYREHEKRRINRIETGEQIKAIQLVVSNKCNYNCKYCFTNSIYSSKEREIYQKHDKNQIMTPENAINYIEKVIEKIIKANNKELSIQFFGGEPLTNWNTIERVLDHYKNEDRLKIDYSIVTNGALITPKISEYLKKYNVPVIMSFDSPNRSHRYTNDGSDSIKNTIKSLEILKENNNYIAFNSVLSRDTFDYFNNDIVDFAQNYNVSEIGILLDLNPSFYKDFNLDDIVNKVIDLYEYGLDNGIIVTGYWHITYQNIIMNKSIDRGYKTCSATGGQLSIEPMGVVFACKGSSGYFGNMNDLEGLLSCENYIKYASRSFINSNNCINCELIGHCSGLCLGAIEKKYGNIMYMDKGACDLYKLLIRRLIEREKNIFRYDIDESK.

The region spanning 106-331 (GEQIKAIQLV…VIDLYEYGLD (226 aa)) is the Radical SAM core domain. 11 residues coordinate [4Fe-4S] cluster: C120, C124, C127, Y339, C360, C378, C414, C417, C423, C427, and C446.

This sequence belongs to the radical SAM superfamily. The cofactor is [4Fe-4S] cluster.

The catalysed reaction is L-isoleucyl-[protein] + AH2 + 2 S-adenosyl-L-methionine = methylcyclopropylglycine-[protein] + 2 5'-deoxyadenosine + 2 L-methionine + A + 2 H(+). Radical S-adenosylmethionine (SAM) enzyme that catalyzes the formation of methylcyclopropylglycine (mCPG) residues from isoleucine residues residing in the repeating TIGSVS motif of the precursor peptide TigB. Is thus involved in the maturation of a ribosomally synthesized and post-translationally modified peptide (RiPP). This is Radical SAM cyclopropyl synthase TigE from Paramaledivibacter caminithermalis (strain DSM 15212 / CIP 107654 / DViRD3) (Clostridium caminithermale).